Reading from the N-terminus, the 372-residue chain is MNKKRVVIKIGSSSLTNEKGEIDHKKLGDHVNALAMLHQHNFEVILVSSGAVAAGFRNLGYSSRPVTLKGKQASAAIGQGLLIHTYMDKFMEYNIRSAQLLLTRSDFSVQKRYKNATSTMLELLERGVIPIINENDTVAVDELTFGDNDMLSALVSGSIHAAQLIILTDIDGIYDKHPGKYASAMRYDTIDLITNDMIQETDVSGSKLGTGGMKSKLMAAKVAASLGVPVFIGKGVGVSKLLEIVNGHGQGTYVRSFRNKQIPIRKQWISLHSTLEGKVFIDDGATQALMHNGGSLLSAGVINTQGDFEDGDVVEVYNRRNLLGRGQVSCSSEELNAANTLKKAKQMTQIPAIEVIHRDSWVMVDQIKEEFQ.

K9 contacts ATP. Substrate-binding residues include S49, D136, and N148. ATP contacts are provided by residues 168–169 and 210–216; these read TD and TGGMKSK. One can recognise a PUA domain in the interval 276-360; that stretch reads EGKVFIDDGA…PAIEVIHRDS (85 aa).

The protein belongs to the glutamate 5-kinase family.

The protein localises to the cytoplasm. The catalysed reaction is L-glutamate + ATP = L-glutamyl 5-phosphate + ADP. Its pathway is amino-acid biosynthesis; L-proline biosynthesis; L-glutamate 5-semialdehyde from L-glutamate: step 1/2. Functionally, catalyzes the transfer of a phosphate group to glutamate to form L-glutamate 5-phosphate. The sequence is that of Glutamate 5-kinase from Oceanobacillus iheyensis (strain DSM 14371 / CIP 107618 / JCM 11309 / KCTC 3954 / HTE831).